The chain runs to 315 residues: Large ribosomal subunit protein uL29m (315 aa).

It belongs to the universal ribosomal protein uL29 family. As to quaternary structure, component of the mitochondrial large ribosomal subunit. Mature mitochondrial ribosomes consist of a small (37S) and a large (54S) subunit. The 37S subunit contains at least 33 different proteins and 1 molecule of RNA (15S). The 54S subunit contains at least 45 different proteins and 1 molecule of RNA (21S).

The protein localises to the mitochondrion. This chain is Large ribosomal subunit protein uL29m (MRPL4), found in Candida glabrata (strain ATCC 2001 / BCRC 20586 / JCM 3761 / NBRC 0622 / NRRL Y-65 / CBS 138) (Yeast).